We begin with the raw amino-acid sequence, 120 residues long: UPF0145 protein UNCMA_30400 (120 aa).

This sequence belongs to the UPF0145 family.

In Methanocella arvoryzae (strain DSM 22066 / NBRC 105507 / MRE50), this protein is UPF0145 protein UNCMA_30400.